A 512-amino-acid polypeptide reads, in one-letter code: Putative UDP-glucuronosyltransferase ugt-55 (512 aa).

Positions 1 to 22 (MQLLTLPTLIFIFLNYGTPCLS) are cleaved as a signal peptide. A helical transmembrane segment spans residues 487–507 (ILLYLDSIAMFTLTLLTMILI).

The protein belongs to the UDP-glycosyltransferase family.

It is found in the membrane. The enzyme catalyses glucuronate acceptor + UDP-alpha-D-glucuronate = acceptor beta-D-glucuronoside + UDP + H(+). This is Putative UDP-glucuronosyltransferase ugt-55 (ugt-55) from Caenorhabditis elegans.